The primary structure comprises 1157 residues: Hephaestin (1157 aa).

Positions 1–18 (MKAGHLLWALLLMHSLWS) are cleaved as a signal peptide. The Extracellular segment spans residues 19-1109 (IPTDGAIRNY…PIKDVEILSS (1091 aa)). Plastocyanin-like domains follow at residues 24 to 206 (AIRN…LITC), 218 to 366 (QRKD…VDSC), 370 to 559 (PPVD…LLVC), 569 to 717 (KQKG…VSQC), 730 to 902 (ASRV…LVIC), and 910 to 1066 (NGGR…SHEE). Residues N49 and N54 are each glycosylated (N-linked (GlcNAc...) asparagine). Na(+)-binding residues include G70 and Y73. 2 residues coordinate Cu(2+): H126 and H128. Position 126 (H126) interacts with O2. Ca(2+)-binding residues include K134, D152, and D153. The N-linked (GlcNAc...) asparagine glycan is linked to N164. Cysteines 180 and 206 form a disulfide. Positions 186 and 188 each coordinate Cu(2+). H186 is a binding site for O2. N-linked (GlcNAc...) asparagine glycosylation occurs at N236. S265 lines the Na(+) pocket. C285 and C366 are disulfide-bonded. H304, C347, and H352 together coordinate Cu(2+). Y416, G425, and Y428 together coordinate Na(+). C533 and C559 are disulfide-bonded. An N-linked (GlcNAc...) asparagine glycan is attached at N587. S616 serves as a coordination point for Na(+). Residues C636 and C717 are joined by a disulfide bond. Cu(2+) contacts are provided by H655, C698, H703, and M708. N713 and N757 each carry an N-linked (GlcNAc...) asparagine glycan. Na(+)-binding residues include F768 and G777. C876 and C902 are disulfide-bonded. Residue N930 is glycosylated (N-linked (GlcNAc...) asparagine). The Cu(2+) site is built by H999, H1002, H1004, H1044, C1045, H1046, H1050, and M1055. Positions 1002 and 1004 each coordinate O2. H1046 is a binding site for O2. The chain crosses the membrane as a helical span at residues 1110–1130 (ALIAICVLLLLIALALGGVVW). Topologically, residues 1131–1157 (YQHRQRKLRRNRRSILDDSFKLLSLKQ) are cytoplasmic. A phosphoserine mark is found at S1144, S1149, and S1154.

This sequence belongs to the multicopper oxidase family. As to quaternary structure, part of a complex composed of SLC40A1/ferroportin, TF/transferrin and HEPH/hephaestin that transfers iron from cells to transferrin. The cofactor is Cu cation.

The protein resides in the basolateral cell membrane. It catalyses the reaction 4 Fe(2+) + O2 + 4 H(+) = 4 Fe(3+) + 2 H2O. In terms of biological role, plasma membrane ferroxidase that mediates the extracellular conversion of ferrous/Fe(2+) iron into its ferric/Fe(3+) form. Couples ferroportin which specifically exports ferrous/Fe(2+) iron from cells to transferrin that only binds and shuttles extracellular ferric/Fe(3+) iron throughout the body. By helping iron transfer from cells to blood mainly contributes to dietary iron absorption by the intestinal epithelium and more generally regulates iron levels in the body. This chain is Hephaestin, found in Mus musculus (Mouse).